Here is a 402-residue protein sequence, read N- to C-terminus: Methylthioribose-1-phosphate isomerase (402 aa).

D275 functions as the Proton donor in the catalytic mechanism.

The protein belongs to the eIF-2B alpha/beta/delta subunits family. MtnA subfamily.

The protein localises to the cytoplasm. The protein resides in the nucleus. It carries out the reaction 5-(methylsulfanyl)-alpha-D-ribose 1-phosphate = 5-(methylsulfanyl)-D-ribulose 1-phosphate. The protein operates within amino-acid biosynthesis; L-methionine biosynthesis via salvage pathway; L-methionine from S-methyl-5-thio-alpha-D-ribose 1-phosphate: step 1/6. Functionally, catalyzes the interconversion of methylthioribose-1-phosphate (MTR-1-P) into methylthioribulose-1-phosphate (MTRu-1-P). This chain is Methylthioribose-1-phosphate isomerase, found in Clavispora lusitaniae (strain ATCC 42720) (Yeast).